A 442-amino-acid chain; its full sequence is Trigger factor (442 aa).

The region spanning 170–250 (GDIATVDYHE…LKALKQRQLP (81 aa)) is the PPIase FKBP-type domain.

Belongs to the FKBP-type PPIase family. Tig subfamily.

Its subcellular location is the cytoplasm. It carries out the reaction [protein]-peptidylproline (omega=180) = [protein]-peptidylproline (omega=0). Its function is as follows. Involved in protein export. Acts as a chaperone by maintaining the newly synthesized protein in an open conformation. Functions as a peptidyl-prolyl cis-trans isomerase. The sequence is that of Trigger factor (tig) from Treponema pallidum (strain Nichols).